Consider the following 153-residue polypeptide: Pheromone-binding protein Gp-9 (153 aa).

An N-terminal signal peptide occupies residues 1–19 (MKTFVLHIFIFALVAFASA). Intrachain disulfides connect C37–C77, C73–C129, and C118–C138.

It belongs to the PBP/GOBP family. As to quaternary structure, homodimer.

The protein localises to the secreted. In terms of biological role, colony queen number, a major feature of social organization, is associated with worker genotype for Gp-9. Colonies are headed by either a single reproductive queen (monogyne form) or multiple queens (polygyne form). Differences in worker Gp-9 genotypes between social forms may cause differences in workers' abilities to recognize queens and regulate their numbers. The chain is Pheromone-binding protein Gp-9 from Solenopsis richteri (Black imported fire ant).